The chain runs to 147 residues: Hemoglobin subunit beta (147 aa).

V2 carries the post-translational modification N-acetylvaline. Positions 3–147 constitute a Globin domain; sequence HLSGSEKTAV…VSHALAHKYH (145 aa). T13 carries the phosphothreonine modification. Phosphoserine is present on S45. K60 bears the N6-acetyllysine mark. Residue H64 coordinates heme b. K83 bears the N6-acetyllysine mark. H93 serves as a coordination point for heme b. C94 bears the S-nitrosocysteine mark. Residue K145 is modified to N6-acetyllysine.

It belongs to the globin family. As to quaternary structure, heterotetramer of two alpha chains and two beta chains. In terms of tissue distribution, red blood cells.

Its function is as follows. Involved in oxygen transport from the lung to the various peripheral tissues. The chain is Hemoglobin subunit beta (HBB) from Tachyglossus aculeatus aculeatus (Southeast Australian short-beaked echidna).